The chain runs to 144 residues: Putative acetyltransferase SAOUHSC_00995 (144 aa).

The region spanning 1–141 (MFSKVNNQKM…EHIEMTKKLT (141 aa)) is the N-acetyltransferase domain. CoA contacts are provided by residues 71 to 73 (VAV), glycine 79, and 112 to 114 (PFY).

This sequence belongs to the UPF0039 (ElaA) family.

Could catalyze the transfer of an acetyl group from acetyl coenzyme A (AcCoA) to an acceptor substrate and release both CoA and the acetylated product. The polypeptide is Putative acetyltransferase SAOUHSC_00995 (Staphylococcus aureus (strain NCTC 8325 / PS 47)).